Consider the following 485-residue polypeptide: Serine hydroxymethyltransferase, mitochondrial (485 aa).

At Lys259 the chain carries N6-(pyridoxal phosphate)lysine.

This sequence belongs to the SHMT family. Homotetramer. Pyridoxal 5'-phosphate serves as cofactor.

The protein localises to the mitochondrion. The enzyme catalyses (6R)-5,10-methylene-5,6,7,8-tetrahydrofolate + glycine + H2O = (6S)-5,6,7,8-tetrahydrofolate + L-serine. It participates in one-carbon metabolism; tetrahydrofolate interconversion. Functionally, interconversion of serine and glycine. The polypeptide is Serine hydroxymethyltransferase, mitochondrial (SHM1) (Candida glabrata (strain ATCC 2001 / BCRC 20586 / JCM 3761 / NBRC 0622 / NRRL Y-65 / CBS 138) (Yeast)).